Here is a 65-residue protein sequence, read N- to C-terminus: Large ribosomal subunit protein bL31 (65 aa).

Zn(2+) is bound by residues cysteine 16, cysteine 18, cysteine 36, and cysteine 39.

It belongs to the bacterial ribosomal protein bL31 family. Type A subfamily. As to quaternary structure, part of the 50S ribosomal subunit. The cofactor is Zn(2+).

Functionally, binds the 23S rRNA. This is Large ribosomal subunit protein bL31 from Geotalea daltonii (strain DSM 22248 / JCM 15807 / FRC-32) (Geobacter daltonii).